Reading from the N-terminus, the 401-residue chain is Chalcone synthase 2 (401 aa).

Residue C168 is part of the active site.

This sequence belongs to the thiolase-like superfamily. Chalcone/stilbene synthases family.

It catalyses the reaction (E)-4-coumaroyl-CoA + 3 malonyl-CoA + 3 H(+) = 2',4,4',6'-tetrahydroxychalcone + 3 CO2 + 4 CoA. It participates in secondary metabolite biosynthesis; flavonoid biosynthesis. Functionally, the primary product of this enzyme is 4,2',4',6'-tetrahydroxychalcone (also termed naringenin-chalcone or chalcone) which can under specific conditions spontaneously isomerize into naringenin. In Sorghum bicolor (Sorghum), this protein is Chalcone synthase 2 (CHS2).